The following is a 744-amino-acid chain: Cell surface receptor daf-4 (744 aa).

The signal sequence occupies residues 1–31 (MNQKGTVRLKALVLICLPLFLIATPVPVAVT). Residues 48 to 253 (WANTLVSKVA…IALLILAYVG (206 aa)) lie on the Extracellular side of the membrane. Residues Asn60, Asn134, and Asn165 are each glycosylated (N-linked (GlcNAc...) asparagine). Residues 254 to 274 (WKFQQNKKEEIKKQQKIKFDM) traverse the membrane as a helical segment. The Cytoplasmic segment spans residues 275–744 (EKTDALEAGN…PSGTFGTFTT (470 aa)). Residues 306-603 (ITDFQLISKG…FARVWNHIMS (298 aa)) form the Protein kinase domain. ATP contacts are provided by residues 312-320 (ISKGRFGKV) and Lys338. Asp440 serves as the catalytic Proton acceptor. Disordered regions lie at residues 605-686 (PDSS…PEPE) and 724-744 (AGAD…TFTT). The span at 620-639 (RGVDDVEQSEKPEGIEEMQH) shows a compositional bias: basic and acidic residues. Positions 731–744 (STPTPSGTFGTFTT) are enriched in low complexity.

The protein belongs to the protein kinase superfamily. TKL Ser/Thr protein kinase family. TGFB receptor subfamily. May interact with daf-1 to regulate dauer larva development. Interacts with sma-10. In terms of tissue distribution, pharynx, intestine, hypodermis and body wall muscles in L1 through to adult stages. Also expressed in head neurons, ventral cord and tail neurons. Subset of head neurons show coexpression with daf-1 when dauer/nondauer decision is made.

It is found in the cell membrane. The catalysed reaction is L-threonyl-[receptor-protein] + ATP = O-phospho-L-threonyl-[receptor-protein] + ADP + H(+). It carries out the reaction L-seryl-[receptor-protein] + ATP = O-phospho-L-seryl-[receptor-protein] + ADP + H(+). Its function is as follows. Involved in a TGF-beta pathway. May be a receptor for TGF-beta-like ligand daf-7. Controls the decision of whether or not larvae enter a developmentally arrested state, known as dauer, in response to environmental conditions. Regulates body size and male tail patterning. Involved in regulating entry into quiescence triggered by satiety. Involved in sensitivity to CO2 levels. This chain is Cell surface receptor daf-4, found in Caenorhabditis elegans.